Here is a 73-residue protein sequence, read N- to C-terminus: Serine rich endogenous peptide 14 (73 aa).

Positions 1–31 (MAAKTSNLVALLLSLFLLLLSISSQVGLGEA) are cleaved as a signal peptide. The interval 44-73 (VSHPSPPPPHRSMAPPIFVPPSTSHKGQGP) is disordered. Residues 59 to 73 (PIFVPPSTSHKGQGP) carry the SCOOP motif motif. Residues 64–73 (PSTSHKGQGP) show a composition bias toward polar residues. Positions 65 to 67 (STS) match the SxS motif essential for MIK2 binding motif.

The protein belongs to the serine rich endogenous peptide (SCOOP) phytocytokine family. In terms of assembly, interacts with MIK2 (via extracellular leucine-rich repeat domain); this interaction triggers the formation of complex between MIK2 and the BAK1/SERK3 and SERK4 coreceptors, and subsequent BAK1 activation by phosphorylation. As to expression, mostly expressed in seedlings shoots and leaves, and, to a lower extent, in roots, stems, siliques, seeds and flowers.

The protein localises to the cell membrane. Its subcellular location is the secreted. It is found in the extracellular space. The protein resides in the apoplast. Brassicaceae-specific phytocytokine (plant endogenous peptide released into the apoplast) perceived by MIK2 in a BAK1/SERK3 and SERK4 coreceptors-dependent manner, that modulates various physiological and antimicrobial processes including growth prevention and reactive oxygen species (ROS) response regulation. Inhibits root growth and regulates root meristems. Prevents general growth and development. Exhibits antibacterial effects against Pseudomonas syringae pv. tomato DC3000, Ralstonia solanacearum, Bacillus subtilis and Agrobacterium tumefaciens, thus being an antimicrobial peptide (AMP). In Arabidopsis thaliana (Mouse-ear cress), this protein is Serine rich endogenous peptide 14.